Consider the following 504-residue polypeptide: Zinc finger protein AEBP2 (504 aa).

The segment at 1-219 (MAAALADMAD…SRMDSEDSIS (219 aa)) is disordered. Ala-2 carries the N-acetylalanine modification. Residues 16–30 (RLSPLSPGSPGPAAR) are compositionally biased toward low complexity. Phosphoserine occurs at positions 18, 21, and 24. Acidic residues predominate over residues 36 to 49 (PEEEEEEDDEEAEA). Positions 59-69 (GGAGGGAGGGE) are enriched in gly residues. The segment covering 86–110 (GDEDEDEEDDEDEGSSSGGAEEESS) has biased composition (acidic residues). A compositionally biased stretch (low complexity) spans 129 to 140 (SLSPGAASSSSG). The residue at position 131 (Ser-131) is a Phosphoserine. Positions 142-153 (GDGKEGLEEPKG) are enriched in basic and acidic residues. 2 stretches are compositionally biased toward gly residues: residues 154 to 168 (PRGG…GGGS) and 178 to 189 (GDEGYGTGGGGS). Phosphoserine is present on residues Ser-199, Ser-203, and Ser-204. The tract at residues 202-287 (MSSDGEPLSR…IHVDGQRGGV (86 aa)) is interaction with RBBP4. The C2H2-type 1 zinc-finger motif lies at 254–279 (YNCCWDQCQACFNSSPDLADHIRSIH). Residues 293–315 (KGCKVYNTPSTSQSWLQRHMLTH) form a C2H2-type 2; degenerate zinc finger. A C2H2-type 3 zinc finger spans residues 321 to 345 (FKCVVGGCNASFASQGGLARHVPTH). Residues 345-358 (HFSQQNSSKVSSQP) are compositionally biased toward polar residues. Residues 345–387 (HFSQQNSSKVSSQPKAKEESPSKAGMNKRRKLKNKRRRSLPRP) are disordered. Residues 370–385 (MNKRRKLKNKRRRSLP) are compositionally biased toward basic residues. The residue at position 383 (Ser-383) is a Phosphoserine. Residues 400–471 (RHRAICFNLS…QLKTKVVHLS (72 aa)) are interaction with SUZ12. The interval 488–504 (TMPQKRLKRFDILNFPR) is important for nucleosome binding activity of the PRC2 complex.

The protein belongs to the AEBP2/jing C2H2-type zinc-finger family. In terms of assembly, self-associates. Associates with the PRC2 complex, which consists of the core components EED, EZH1 or EZH2, SUZ12, and RBBP4, and various combinations of accessory subunits including AEBP2, JARID2, PHF19, MTF2 and EPOP. Found in a monomeric PRC2.2 (class 2) complex consisting of at least SUZ12, RBBP4, AEBP2 and JARID2. Within the PRC2 complex, interacts directly with SUZ12; competes with PHF19 for SUZ12 binding. Interacts with EED, EZH2, and RBBP4. May also interact with RBBP7. As to expression, expressed in brain, brown adipose tissue, white adipose tissue, heart, kidney, lung, skeletal muscle, small intestine and spleen. Expressed at low levels in liver.

The protein localises to the nucleus. In terms of biological role, acts as an accessory subunit for the core Polycomb repressive complex 2 (PRC2), which mediates histone H3K27 (H3K27me3) trimethylation on chromatin leading to transcriptional repression of the affected target gene. Plays a role in nucleosome localization of the PRC2 complex. The polypeptide is Zinc finger protein AEBP2 (Aebp2) (Mus musculus (Mouse)).